The sequence spans 591 residues: Aspartate--tRNA ligase (591 aa).

Glu173 serves as a coordination point for L-aspartate. The tract at residues 197–200 (QLFK) is aspartate. Arg219 contributes to the L-aspartate binding site. ATP-binding positions include 219 to 221 (RDE) and Gln228. Residue His448 participates in L-aspartate binding. Glu482 lines the ATP pocket. Arg489 provides a ligand contact to L-aspartate. An ATP-binding site is contributed by 534–537 (GLDR).

It belongs to the class-II aminoacyl-tRNA synthetase family. Type 1 subfamily. Homodimer.

It is found in the cytoplasm. It catalyses the reaction tRNA(Asp) + L-aspartate + ATP = L-aspartyl-tRNA(Asp) + AMP + diphosphate. In terms of biological role, catalyzes the attachment of L-aspartate to tRNA(Asp) in a two-step reaction: L-aspartate is first activated by ATP to form Asp-AMP and then transferred to the acceptor end of tRNA(Asp). This Shewanella sp. (strain ANA-3) protein is Aspartate--tRNA ligase.